A 314-amino-acid polypeptide reads, in one-letter code: MSSTAAFCLLSTLGGYLVTSFLLLKYPALLHQRKKQRFLSRHISHRGGAGENLENTMAAFQHAVTIGTDMLELDCHITKDEQVVVSHDANLKRSTGVNVNVSDLKYCELPPYLCKLDVPFQRACKCEGTDTRIPLLKEVFEAFPETPINIDIKVNNNVLIQKVSELVKQYKREHLTVWGNASSEIVDKCYKENSDIPILFSLQRVLLILGLFFTGLLPFVPIREQFFEIPMPSIILKLKEPHIISKGHKFLIWLSDTLLMRKALFDHLTARGIQVYIWVLNEEHEYKRAFDLGATGVMTDYPTKLKEFLNNMSA.

Residues methionine 1 to serine 3 lie on the Extracellular side of the membrane. Residues threonine 4–leucine 24 traverse the membrane as a helical segment. The Cytoplasmic portion of the chain corresponds to lysine 25–aspartate 195. In terms of domain architecture, GP-PDE spans serine 40–leucine 309. 3 residues coordinate a divalent metal cation: glutamate 72, aspartate 74, and histidine 87. Residues isoleucine 196–leucine 216 traverse the membrane as a helical segment. Residues leucine 217–alanine 314 lie on the Extracellular side of the membrane.

Belongs to the glycerophosphoryl diester phosphodiesterase family.

The protein localises to the cytoplasm. The protein resides in the membrane. Its subcellular location is the perinuclear region. It is found in the endoplasmic reticulum. It catalyses the reaction a 1-O-alkyl-sn-glycero-3-phosphocholine + H2O = a 1-O-alkyl-sn-glycero-3-phosphate + choline + H(+). The enzyme catalyses 1-hexadecanoyl-sn-glycero-3-phosphocholine + H2O = 1-hexadecanoyl-sn-glycero-3-phosphate + choline + H(+). It carries out the reaction 1-hexadecanoyl-sn-glycero-3-phosphoethanolamine + H2O = 1-hexadecanoyl-sn-glycero-3-phosphate + ethanolamine + H(+). The catalysed reaction is N-hexadecanoyl-sn-glycero-3-phosphoethanolamine + H2O = N-hexadecanoylethanolamine + sn-glycerol 3-phosphate + H(+). It catalyses the reaction N-(5Z,8Z,11Z,14Z-eicosatetraenoyl)-1-(9Z-octadecenoyl)-sn-glycero-3-phosphoethanolamine + H2O = N-(5Z,8Z,11Z,14Z-eicosatetraenoyl)-ethanolamine + 1-(9Z-octadecenoyl)-sn-glycero-3-phosphate + H(+). The enzyme catalyses N,1-di-(9Z-octadecenoyl)-sn-glycero-3-phosphoethanolamine + H2O = N-(9Z-octadecenoyl) ethanolamine + 1-(9Z-octadecenoyl)-sn-glycero-3-phosphate + H(+). It carries out the reaction N-hexadecanoyl-1-(9Z-octadecenoyl)-sn-glycero-3-phosphoethanolamine + H2O = N-hexadecanoylethanolamine + 1-(9Z-octadecenoyl)-sn-glycero-3-phosphate + H(+). The catalysed reaction is 1-O-hexadecyl-sn-glycero-3-phosphocholine + H2O = 1-O-hexadecyl-sn-glycero-3-phosphate + choline + H(+). It catalyses the reaction 1-(9Z-octadecenoyl)-sn-glycero-3-phosphocholine + H2O = 1-(9Z-octadecenoyl)-sn-glycero-3-phosphate + choline + H(+). The enzyme catalyses N,1-dihexadecanoyl-sn-glycero-3-phosphoethanolamine + H2O = N-hexadecanoylethanolamine + 1-hexadecanoyl-sn-glycero-3-phosphate + H(+). It carries out the reaction 1-O-(1Z-octadecenyl)-sn-glycero-3-phospho-(N-5Z,8Z,11Z,14Z-eicosatetraenoyl)-ethanolamine + H2O = 1-O-(1Z-octadecenyl)-sn-glycero-3-phosphate + N-(5Z,8Z,11Z,14Z-eicosatetraenoyl)-ethanolamine + H(+). The catalysed reaction is 1-O-(1Z-octadecenyl)-sn-glycero-3-phospho-(N-9Z-octadecenoyl)-ethanolamine + H2O = 1-O-(1Z-octadecenyl)-sn-glycero-3-phosphate + N-(9Z-octadecenoyl) ethanolamine + H(+). It catalyses the reaction 1-O-(1Z-octadecenyl)-sn-glycero-3-phospho-N-hexadecanoyl-ethanolamine + H2O = 1-O-(1Z-octadecenyl)-sn-glycero-3-phosphate + N-hexadecanoylethanolamine + H(+). Lysophospholipase D activity is increased by magnesium and manganese and inhibited by calcium in a concentration dependent manner. Loss of lysophospholipase D activity by addition of EDTA. In terms of biological role, hydrolyzes lysoglycerophospholipids to produce lysophosphatidic acid (LPA) and the corresponding amines. Shows a preference for 1-O-alkyl-sn-glycero-3-phosphocholine (lyso-PAF), lysophosphatidylethanolamine (lyso-PE) and lysophosphatidylcholine (lyso-PC). May be involved in bioactive N-acylethanolamine biosynthesis from both N-acyl-lysoplasmenylethanolamin (N-acyl-lysoPlsEt) and N-acyl-lysophosphatidylethanolamin (N-acyl-lysoPE). In addition, hydrolyzes glycerophospho-N-acylethanolamine to N-acylethanolamine. Does not display glycerophosphodiester phosphodiesterase activity, since it cannot hydrolyze either glycerophosphoinositol or glycerophosphocholine. The chain is Lysophospholipase D GDPD1 from Rattus norvegicus (Rat).